The primary structure comprises 339 residues: Undifferentiated embryonic cell transcription factor 1 (339 aa).

Disordered regions lie at residues 1–62 and 144–270; these read MLLR…QRTP and MGLL…QVAP. Phosphoserine occurs at positions 15, 18, 48, and 54. A compositionally biased stretch (basic residues) spans 154-170; that stretch reads RVRRRSTGPGRPQRRGR. Low complexity-rich tracts occupy residues 171 to 193 and 218 to 229; these read SSLS…PLAA and TSSPPLTSTDTL. Residues 261 to 270 show a composition bias toward polar residues; the sequence is GRASSPQVAP. Residues 279–310 are leucine-zipper; it reads QTLTHLGDISTVLGPLRDQLSTLNQHVEHLRG.

As to quaternary structure, binds to the N-terminal region of ATF2. Associates with the TFIID complex through interaction with TBP. Phosphorylated. In terms of tissue distribution, expressed mainly in pluripotent cells with expression rapidly down-regulated upon cell differentiation.

It is found in the nucleus. Its function is as follows. Acts as a transcriptional coactivator of ATF2. The chain is Undifferentiated embryonic cell transcription factor 1 from Mus musculus (Mouse).